The primary structure comprises 373 residues: 3 beta-hydroxysteroid dehydrogenase/Delta 5--&gt;4-isomerase (373 aa).

The active-site Proton acceptor is the Tyr155. Lys159 is an NAD(+) binding site. A helical transmembrane segment spans residues 288–308 (IFLKYWLAFLLEIVSFLLSPI).

It belongs to the 3-beta-HSD family.

It is found in the endoplasmic reticulum membrane. The protein localises to the mitochondrion membrane. It carries out the reaction a 3beta-hydroxy-Delta(5)-steroid + NAD(+) = a 3-oxo-Delta(5)-steroid + NADH + H(+). The enzyme catalyses a 3-oxo-Delta(5)-steroid = a 3-oxo-Delta(4)-steroid. Its pathway is lipid metabolism; steroid biosynthesis. 3-beta-HSD is a bifunctional enzyme, that catalyzes the oxidative conversion of Delta(5)-ene-3-beta-hydroxy steroid, and the oxidative conversion of ketosteroids. The 3-beta-HSD enzymatic system plays a crucial role in the biosynthesis of all classes of hormonal steroids. This chain is 3 beta-hydroxysteroid dehydrogenase/Delta 5--&gt;4-isomerase (HSD3B), found in Equus caballus (Horse).